The primary structure comprises 444 residues: MESVEPPVKDGILYQQHVKFGKKCWRKVWALLYAGGPSGVARLESWDVRDGGLGPAGDRSTGPSRRGERRVIRLADCVSVLPADGESCPRDTGAFLITTTERSHLLAAQHRQSWVDPICQLAFPGTGECSSGSGQAESPKRGFVPMEENSIYSSWQEVTEFPVIVQRTEATSRCQLKGPYLLVLGQDDIQLRETSKPQACFSWPYRFLRKYGSDKGVFSFEAGRRCDSGEGLFAFSSPRAPDICGVVAAAIARQRERLPELAMSPPCPLPRALSLPSLEPPGELREVAPGFELPTPRKLPLTDPGPQSLPLLLSPTQEGPASGLYASVCKQTSKHTGTAEHLYENVCMLEASPGLTNGGPEAQEGPPGGRSPLGSPIYHNTEDLSWPGSAQDSNLEAQYRRLLELELDEAGSAGRSGAQAGIKAKLVTLLTRERKKGPAPCDRP.

The PH domain maps to 7 to 123 (PVKDGILYQQ…WVDPICQLAF (117 aa)). Phosphoserine is present on Ser-138. Residues 157-261 (EVTEFPVIVQ…ARQRERLPEL (105 aa)) form the IRS-type PTB domain. A Phosphoserine modification is found at Ser-274. The interval 278–299 (LEPPGELREVAPGFELPTPRKL) is disordered. A phosphoserine mark is found at Ser-308 and Ser-314. Tyr-325 bears the Phosphotyrosine mark. The disordered stretch occupies residues 354-390 (GLTNGGPEAQEGPPGGRSPLGSPIYHNTEDLSWPGSA). Residues 358–376 (GGPEAQEGPPGGRSPLGSP) are compositionally biased toward low complexity. Position 371 is a phosphoserine (Ser-371).

The protein belongs to the DOK family. Type A subfamily. On tyrosine phosphorylation, interacts with CSK and INPP5D/SHIP1 via their SH2 domains. Both Tyr-325 and Tyr-343 are required for interaction with INPP5D. Only Tyr-325 is required for interaction with CSK. Binds ABL1 through the PTB domain and in a kinase-dependent manner. Does not interact with RasGAP. Post-translationally, constitutively tyrosine-phosphorylated. In terms of processing, on IL2 stimulation, phosphorylated on C-terminal tyrosine residues possibly by Src kinases. Can also be phosphorylated by ABL1 kinase. As to expression, predominantly expressed in bone marrow, spleen and lung. Low levels in heart, brain, liver, muscle, thymus, kidney and testis. Highly expressed in B-cells and macrophages.

The protein resides in the cytoplasm. The protein localises to the cell membrane. DOK proteins are enzymatically inert adaptor or scaffolding proteins. They provide a docking platform for the assembly of multimolecular signaling complexes. DOK3 is a negative regulator of JNK signaling in B-cells through interaction with INPP5D/SHIP1. May modulate ABL1 function. This chain is Docking protein 3 (Dok3), found in Mus musculus (Mouse).